The primary structure comprises 119 residues: Large ribosomal subunit protein bL20 (119 aa).

The protein belongs to the bacterial ribosomal protein bL20 family.

Binds directly to 23S ribosomal RNA and is necessary for the in vitro assembly process of the 50S ribosomal subunit. It is not involved in the protein synthesizing functions of that subunit. This Nitrosomonas europaea (strain ATCC 19718 / CIP 103999 / KCTC 2705 / NBRC 14298) protein is Large ribosomal subunit protein bL20.